The chain runs to 145 residues: UPF0735 ACT domain-containing protein CKL_0858 (145 aa).

The ACT domain occupies 69 to 144; that stretch reads TLGLTLAHKA…SVIKVNLAAV (76 aa).

This sequence belongs to the UPF0735 family.

This Clostridium kluyveri (strain ATCC 8527 / DSM 555 / NBRC 12016 / NCIMB 10680 / K1) protein is UPF0735 ACT domain-containing protein CKL_0858.